The following is a 380-amino-acid chain: uncharacterized protein (380 aa).

The interval 251–275 is disordered; sequence NMSERPPTPSHDTASSSTSTDPNPL. Over residues 260–272 the composition is skewed to low complexity; sequence SHDTASSSTSTDP.

This is an uncharacterized protein from Allium cepa var. aggregatum (Shallot).